The chain runs to 199 residues: Fe/S biogenesis protein NfuA (199 aa).

[4Fe-4S] cluster-binding residues include Cys-151 and Cys-154.

Belongs to the NfuA family. Homodimer. [4Fe-4S] cluster serves as cofactor.

Its function is as follows. Involved in iron-sulfur cluster biogenesis. Binds a 4Fe-4S cluster, can transfer this cluster to apoproteins, and thereby intervenes in the maturation of Fe/S proteins. Could also act as a scaffold/chaperone for damaged Fe/S proteins. The sequence is that of Fe/S biogenesis protein NfuA from Xylella fastidiosa (strain M23).